Reading from the N-terminus, the 175-residue chain is Large ribosomal subunit protein uL10 (175 aa).

The protein belongs to the universal ribosomal protein uL10 family. Part of the ribosomal stalk of the 50S ribosomal subunit. The N-terminus interacts with L11 and the large rRNA to form the base of the stalk. The C-terminus forms an elongated spine to which L12 dimers bind in a sequential fashion forming a multimeric L10(L12)X complex.

In terms of biological role, forms part of the ribosomal stalk, playing a central role in the interaction of the ribosome with GTP-bound translation factors. This chain is Large ribosomal subunit protein uL10, found in Synechococcus elongatus (strain ATCC 33912 / PCC 7942 / FACHB-805) (Anacystis nidulans R2).